The following is a 656-amino-acid chain: Macrolide export ATP-binding/permease protein MacB (656 aa).

The ABC transporter domain maps to 20 to 258; sequence IELAGITRSF…EPDFAPHVDR (239 aa). Residue 56 to 63 coordinates ATP; the sequence is GASGSGKS. The next 4 membrane-spanning stretches (helical) occupy residues 284-304, 531-551, 591-611, and 619-639; these read ALTLLGIVIGVASVIAMLAIG, LTILLGTVAAISLLVGGIGVM, ALGGLIGVAVGLGTAAVIALF, and LLPVVLAFGCAFATGLVFGYL.

Belongs to the ABC transporter superfamily. Macrolide exporter (TC 3.A.1.122) family. In terms of assembly, homodimer.

It localises to the cell inner membrane. Its function is as follows. Non-canonical ABC transporter that contains transmembrane domains (TMD), which form a pore in the inner membrane, and an ATP-binding domain (NBD), which is responsible for energy generation. Confers resistance against macrolides. The sequence is that of Macrolide export ATP-binding/permease protein MacB from Azoarcus sp. (strain BH72).